Consider the following 183-residue polypeptide: Translation initiation factor IF-3 (183 aa).

It belongs to the IF-3 family. In terms of assembly, monomer.

The protein localises to the cytoplasm. Its function is as follows. IF-3 binds to the 30S ribosomal subunit and shifts the equilibrium between 70S ribosomes and their 50S and 30S subunits in favor of the free subunits, thus enhancing the availability of 30S subunits on which protein synthesis initiation begins. The chain is Translation initiation factor IF-3 from Pseudomonas aeruginosa (strain ATCC 15692 / DSM 22644 / CIP 104116 / JCM 14847 / LMG 12228 / 1C / PRS 101 / PAO1).